Reading from the N-terminus, the 239-residue chain is Lactate utilization protein A 2 (239 aa).

This sequence belongs to the LutA/YkgE family.

Functionally, is involved in L-lactate degradation and allows cells to grow with lactate as the sole carbon source. The sequence is that of Lactate utilization protein A 2 from Bacillus mycoides (strain KBAB4) (Bacillus weihenstephanensis).